A 424-amino-acid chain; its full sequence is Histidinol dehydrogenase (424 aa).

Residues tyrosine 121, glutamine 183, and asparagine 206 each contribute to the NAD(+) site. Substrate contacts are provided by serine 229, glutamine 251, and histidine 254. Zn(2+) is bound by residues glutamine 251 and histidine 254. Residues glutamate 319 and histidine 320 each act as proton acceptor in the active site. Positions 320, 353, 407, and 412 each coordinate substrate. Aspartate 353 lines the Zn(2+) pocket. Residue histidine 412 participates in Zn(2+) binding.

Belongs to the histidinol dehydrogenase family. It depends on Zn(2+) as a cofactor.

The enzyme catalyses L-histidinol + 2 NAD(+) + H2O = L-histidine + 2 NADH + 3 H(+). It participates in amino-acid biosynthesis; L-histidine biosynthesis; L-histidine from 5-phospho-alpha-D-ribose 1-diphosphate: step 9/9. In terms of biological role, catalyzes the sequential NAD-dependent oxidations of L-histidinol to L-histidinaldehyde and then to L-histidine. The chain is Histidinol dehydrogenase from Halalkalibacterium halodurans (strain ATCC BAA-125 / DSM 18197 / FERM 7344 / JCM 9153 / C-125) (Bacillus halodurans).